Consider the following 156-residue polypeptide: Ribosomal RNA large subunit methyltransferase H (156 aa).

S-adenosyl-L-methionine is bound by residues Leu73, Gly104, and 123-128 (VSSLTL).

It belongs to the RNA methyltransferase RlmH family. In terms of assembly, homodimer.

The protein localises to the cytoplasm. It carries out the reaction pseudouridine(1915) in 23S rRNA + S-adenosyl-L-methionine = N(3)-methylpseudouridine(1915) in 23S rRNA + S-adenosyl-L-homocysteine + H(+). Its function is as follows. Specifically methylates the pseudouridine at position 1915 (m3Psi1915) in 23S rRNA. The protein is Ribosomal RNA large subunit methyltransferase H of Paraburkholderia phytofirmans (strain DSM 17436 / LMG 22146 / PsJN) (Burkholderia phytofirmans).